The sequence spans 413 residues: Histidine decarboxylase (413 aa).

Histidine 129 is a substrate binding site. An N6-(pyridoxal phosphate)lysine modification is found at lysine 242.

It belongs to the group II decarboxylase family. It depends on pyridoxal 5'-phosphate as a cofactor. In terms of tissue distribution, ripe fruits; not detected in leaves and unripe fruit.

The catalysed reaction is L-histidine + H(+) = histamine + CO2. The protein is Histidine decarboxylase (HDC) of Solanum lycopersicum (Tomato).